We begin with the raw amino-acid sequence, 420 residues long: UDP-N-acetylglucosamine 1-carboxyvinyltransferase (420 aa).

Position 22-23 (22-23 (KN)) interacts with phosphoenolpyruvate. Arginine 92 contacts UDP-N-acetyl-alpha-D-glucosamine. The active-site Proton donor is the cysteine 116. The residue at position 116 (cysteine 116) is a 2-(S-cysteinyl)pyruvic acid O-phosphothioketal. UDP-N-acetyl-alpha-D-glucosamine is bound by residues 121-125 (RPVDQ), aspartate 304, and isoleucine 326.

It belongs to the EPSP synthase family. MurA subfamily.

Its subcellular location is the cytoplasm. It catalyses the reaction phosphoenolpyruvate + UDP-N-acetyl-alpha-D-glucosamine = UDP-N-acetyl-3-O-(1-carboxyvinyl)-alpha-D-glucosamine + phosphate. Its pathway is cell wall biogenesis; peptidoglycan biosynthesis. Its function is as follows. Cell wall formation. Adds enolpyruvyl to UDP-N-acetylglucosamine. This Paraburkholderia phytofirmans (strain DSM 17436 / LMG 22146 / PsJN) (Burkholderia phytofirmans) protein is UDP-N-acetylglucosamine 1-carboxyvinyltransferase.